The sequence spans 397 residues: Mannonate dehydratase (397 aa).

It belongs to the mannonate dehydratase family. Requires Fe(2+) as cofactor. It depends on Mn(2+) as a cofactor.

The catalysed reaction is D-mannonate = 2-dehydro-3-deoxy-D-gluconate + H2O. It functions in the pathway carbohydrate metabolism; pentose and glucuronate interconversion. Functionally, catalyzes the dehydration of D-mannonate. This Yersinia pestis bv. Antiqua (strain Angola) protein is Mannonate dehydratase.